Reading from the N-terminus, the 342-residue chain is Holliday junction branch migration complex subunit RuvB (342 aa).

Positions 1–21 are disordered; that stretch reads MSVEHSPVDPSAEPPEKAEEA. A large ATPase domain (RuvB-L) region spans residues 1–184; that stretch reads MSVEHSPVDP…FGFTAQLDYY (184 aa). ATP is bound by residues Leu-23, Arg-24, Gly-65, Lys-68, Thr-69, Thr-70, 131 to 133, Arg-174, Tyr-184, and Arg-221; that span reads EDF. Thr-69 provides a ligand contact to Mg(2+). Residues 185–255 form a small ATPAse domain (RuvB-S) region; sequence EVADLERIVT…GAETALDLYE (71 aa). The tract at residues 258-342 is head domain (RuvB-H); it reads PLGLDRLDRA…PPDSSGEGLF (85 aa). DNA-binding residues include Arg-313 and Arg-318.

This sequence belongs to the RuvB family. In terms of assembly, homohexamer. Forms an RuvA(8)-RuvB(12)-Holliday junction (HJ) complex. HJ DNA is sandwiched between 2 RuvA tetramers; dsDNA enters through RuvA and exits via RuvB. An RuvB hexamer assembles on each DNA strand where it exits the tetramer. Each RuvB hexamer is contacted by two RuvA subunits (via domain III) on 2 adjacent RuvB subunits; this complex drives branch migration. In the full resolvosome a probable DNA-RuvA(4)-RuvB(12)-RuvC(2) complex forms which resolves the HJ.

Its subcellular location is the cytoplasm. It catalyses the reaction ATP + H2O = ADP + phosphate + H(+). Its function is as follows. The RuvA-RuvB-RuvC complex processes Holliday junction (HJ) DNA during genetic recombination and DNA repair, while the RuvA-RuvB complex plays an important role in the rescue of blocked DNA replication forks via replication fork reversal (RFR). RuvA specifically binds to HJ cruciform DNA, conferring on it an open structure. The RuvB hexamer acts as an ATP-dependent pump, pulling dsDNA into and through the RuvAB complex. RuvB forms 2 homohexamers on either side of HJ DNA bound by 1 or 2 RuvA tetramers; 4 subunits per hexamer contact DNA at a time. Coordinated motions by a converter formed by DNA-disengaged RuvB subunits stimulates ATP hydrolysis and nucleotide exchange. Immobilization of the converter enables RuvB to convert the ATP-contained energy into a lever motion, pulling 2 nucleotides of DNA out of the RuvA tetramer per ATP hydrolyzed, thus driving DNA branch migration. The RuvB motors rotate together with the DNA substrate, which together with the progressing nucleotide cycle form the mechanistic basis for DNA recombination by continuous HJ branch migration. Branch migration allows RuvC to scan DNA until it finds its consensus sequence, where it cleaves and resolves cruciform DNA. The sequence is that of Holliday junction branch migration complex subunit RuvB from Cutibacterium acnes (strain DSM 16379 / KPA171202) (Propionibacterium acnes).